Reading from the N-terminus, the 195-residue chain is Myelin-associated neurite-outgrowth inhibitor (195 aa).

Over Met-1–Lys-18 the chain is Cytoplasmic. The chain crosses the membrane as a helical span at residues Gly-19 to Pro-43. Residues Gly-44 to Asn-143 lie on the Extracellular side of the membrane. A helical transmembrane segment spans residues Gly-144–Leu-163. Over Thr-164–Trp-195 the chain is Cytoplasmic.

It belongs to the FAM168 family.

It is found in the cytoplasm. The protein localises to the perinuclear region. The protein resides in the cell membrane. Its subcellular location is the cell projection. It localises to the axon. Its function is as follows. Inhibitor of neuronal axonal outgrowth. This Danio rerio (Zebrafish) protein is Myelin-associated neurite-outgrowth inhibitor (fam168b).